Here is a 348-residue protein sequence, read N- to C-terminus: Sulfate/thiosulfate import ATP-binding protein CysA (348 aa).

The ABC transporter domain maps to 3–237 (IEIRNITKSF…PATPFVCQFI (235 aa)). 35–42 (GPSGCGKT) contacts ATP.

Belongs to the ABC transporter superfamily. Sulfate/tungstate importer (TC 3.A.1.6) family. In terms of assembly, the complex is composed of two ATP-binding proteins (CysA), two transmembrane proteins (CysT and CysW) and a solute-binding protein (CysP).

Its subcellular location is the cell inner membrane. The enzyme catalyses sulfate(out) + ATP + H2O = sulfate(in) + ADP + phosphate + H(+). The catalysed reaction is thiosulfate(out) + ATP + H2O = thiosulfate(in) + ADP + phosphate + H(+). Its function is as follows. Part of the ABC transporter complex CysAWTP involved in sulfate/thiosulfate import. Responsible for energy coupling to the transport system. This chain is Sulfate/thiosulfate import ATP-binding protein CysA, found in Methylococcus capsulatus (strain ATCC 33009 / NCIMB 11132 / Bath).